Reading from the N-terminus, the 753-residue chain is Striatin-4 (753 aa).

The segment at 10–65 (VAAAASSCRPLGSGAGPGPTGAAPVSAPAPGPGPAGKGGGGGGSPGPTAGPEPLSL) is disordered. Over residues 43 to 54 (PAGKGGGGGGSP) the composition is skewed to gly residues. Ser53 is subject to Phosphoserine. Residues 69 to 136 (LHFIQHEWAR…QERAKYHKLK (68 aa)) adopt a coiled-coil conformation. The tract at residues 71-79 (FIQHEWARF) is caveolin-binding. Positions 165 to 182 (ENSPLVWKEGRQLLRQYL) are calmodulin-binding. Ser206 bears the Phosphoserine mark. 3 disordered regions span residues 213 to 232 (VEPSEGAPRAPPGPAGLSGG), 271 to 345 (CEDE…SPHE), and 363 to 382 (VDGLPPKVTGPPPGTPQPRP). Composition is skewed to acidic residues over residues 271 to 283 (CEDEDSDEDDELD) and 302 to 317 (EMEDEDEEDDSEDAIN). Ser276 carries the phosphoserine modification. A compositionally biased stretch (basic and acidic residues) spans 332–345 (PDPRRCTVDGSPHE). The segment covering 370–380 (VTGPPPGTPQP) has biased composition (pro residues). WD repeat units lie at residues 436 to 475 (SHYDGIRSLAFHHSQSALLTASEDGTLKLWNLQKAVTAKK), 489 to 528 (AHRGPVLAVAMGSNSEYCYSGGADACIHSWKIPDLSMDPY), 542 to 581 (GHGDAVWGLAFSPTSQRLASCSADGTVRIWDPSSSSPACL), 587 to 628 (ASEH…ALLT), 635 to 674 (SGPTQINQVVSHPNQPLTITAHDDRGIRFLDNRTGKPVHS), 677 to 716 (AHLDAVTCLAVDPNGAFLMSGSHDCSLRLWSLDNKTCVQE), and 723 to 753 (KHEEAIHAVACHPSKALIASAGADALAKVFV).

It belongs to the WD repeat striatin family. In terms of assembly, part of the core of STRIPAK complexes composed of PP2A catalytic and scaffolding subunits, the striatins (PP2A regulatory subunits), the striatin-associated proteins MOB4, STRIP1 and STRIP2, PDCD10 and members of the STE20 kinases, such as STK24 and STK26. Interacts with CTTNBP2NL.

It localises to the cytoplasm. Its function is as follows. Calmodulin-binding scaffolding protein which is the center of the striatin-interacting phosphatase and kinase (STRIPAK) complexes. STRIPAK complexes have critical roles in protein (de)phosphorylation and are regulators of multiple signaling pathways including Hippo, MAPK, nuclear receptor and cytoskeleton remodeling. Different types of STRIPAK complexes are involved in a variety of biological processes such as cell growth, differentiation, apoptosis, metabolism and immune regulation. Key regulator of the expanded Hippo signaling pathway by interacting and allowing the inhibition of MAP4K kinases by the STRIPAK complex. This is Striatin-4 from Homo sapiens (Human).